We begin with the raw amino-acid sequence, 98 residues long: Large ribosomal subunit protein uL23 (98 aa).

Belongs to the universal ribosomal protein uL23 family. Part of the 50S ribosomal subunit. Contacts protein L29, and trigger factor when it is bound to the ribosome.

One of the early assembly proteins it binds 23S rRNA. One of the proteins that surrounds the polypeptide exit tunnel on the outside of the ribosome. Forms the main docking site for trigger factor binding to the ribosome. The chain is Large ribosomal subunit protein uL23 from Bordetella bronchiseptica (strain ATCC BAA-588 / NCTC 13252 / RB50) (Alcaligenes bronchisepticus).